A 464-amino-acid chain; its full sequence is Mitogen-activated protein kinase 10 (464 aa).

A Protein kinase domain is found at 64-359 (YQNLKPIGSG…VDDALQHPYI (296 aa)). Residues 70–78 (IGSGAQGIV) and lysine 93 each bind ATP. Aspartate 189 serves as the catalytic Proton acceptor. Residue threonine 221 is modified to Phosphothreonine; by MAP2K7. The TXY signature appears at 221-223 (TPY). Tyrosine 223 carries the phosphotyrosine; by MAP2K4 modification. The segment at 405–464 (TKNGVVKGQPSPSGAAVNSSESLPPSSSVNDISSMSTDQTLASDTDSSLEASAGPLGCCR) is disordered. Residues 423-432 (SSESLPPSSS) are compositionally biased toward low complexity. The segment covering 433 to 454 (VNDISSMSTDQTLASDTDSSLE) has biased composition (polar residues). 2 S-palmitoyl cysteine lipidation sites follow: cysteine 462 and cysteine 463.

The protein belongs to the protein kinase superfamily. CMGC Ser/Thr protein kinase family. MAP kinase subfamily. Interacts with MAPK8IP1/JIP-1 and MAPK8IP3/JIP-3/JSAP1. Interacts with SPAG9/MAPK8IP4/JIP4. Interacts with HDAC9 and MAPKBP1. Interacts with ARRB2; the interaction enhances MAPK10 activation by MAP3K5. Interacts with SARM1. Interacts with JUND; interaction is inhibited in the presence of MEN1. Mg(2+) serves as cofactor. Dually phosphorylated on Thr-221 and Tyr-223 by MAP2K4 and MAP2K7, which activates the enzyme. MAP2K7 shows a strong preference for Thr-221 while MAP2K4 phosphorylates Tyr-223 preferentially. Weakly autophosphorylated on threonine and tyrosine residues in vitro. Post-translationally, palmitoylation regulates subcellular location and axonal development.

The protein resides in the cytoplasm. The protein localises to the membrane. It is found in the nucleus. It localises to the mitochondrion. It carries out the reaction L-seryl-[protein] + ATP = O-phospho-L-seryl-[protein] + ADP + H(+). The enzyme catalyses L-threonyl-[protein] + ATP = O-phospho-L-threonyl-[protein] + ADP + H(+). With respect to regulation, activated by threonine and tyrosine phosphorylation by two dual specificity kinases, MAP2K4 and MAP2K7. MAP2K7 phosphorylates MAPK10 on Thr-221 causing a conformational change and a large increase in Vmax for the enzyme. MAP2K4 then phosphorylates Tyr-223 resulting in a further increase in Vmax. Inhibited by dual specificity phosphatases, such as DUSP1. Inhibited by HDAC9. Functionally, serine/threonine-protein kinase involved in various processes such as neuronal proliferation, differentiation, migration and programmed cell death. Extracellular stimuli such as pro-inflammatory cytokines or physical stress stimulate the stress-activated protein kinase/c-Jun N-terminal kinase (SAP/JNK) signaling pathway. In this cascade, two dual specificity kinases MAP2K4/MKK4 and MAP2K7/MKK7 phosphorylate and activate MAPK10/JNK3. In turn, MAPK10/JNK3 phosphorylates a number of transcription factors, primarily components of AP-1 such as JUN and ATF2 and thus regulates AP-1 transcriptional activity. Plays regulatory roles in the signaling pathways during neuronal apoptosis. Phosphorylates the neuronal microtubule regulator STMN2. Acts in the regulation of the amyloid-beta precursor protein/APP signaling during neuronal differentiation by phosphorylating APP. Also participates in neurite growth in spiral ganglion neurons. Phosphorylates the CLOCK-BMAL1 heterodimer and plays a role in the photic regulation of the circadian clock. Phosphorylates JUND and this phosphorylation is inhibited in the presence of MEN1. The protein is Mitogen-activated protein kinase 10 (Mapk10) of Rattus norvegicus (Rat).